Consider the following 906-residue polypeptide: Coatomer subunit beta' (906 aa).

WD repeat units follow at residues Ala-13–Thr-52, Val-55–Met-94, Ala-97–Gln-136, Gly-140–Thr-180, Gly-183–Thr-224, Gly-227–Thr-266, Ser-350–Phe-388, and Ser-390–Lys-425. Lys-627 carries the N6-acetyllysine modification. One copy of the WD 9 repeat lies at Ile-746–Lys-783. The segment at Glu-837–Lys-872 is disordered. Ser-859 carries the phosphoserine modification. Thr-861 bears the Phosphothreonine mark. The stretch at Thr-866–Asp-891 forms a coiled coil.

Belongs to the WD repeat COPB2 family. As to quaternary structure, oligomeric complex that consists of at least the alpha, beta, beta', gamma, delta, epsilon and zeta subunits. Probably interacts with PEX11A. Interacts with SCYL1. Interacts with JAGN1.

It is found in the cytoplasm. The protein resides in the cytosol. Its subcellular location is the golgi apparatus membrane. The protein localises to the cytoplasmic vesicle. It localises to the COPI-coated vesicle membrane. Functionally, the coatomer is a cytosolic protein complex that binds to dilysine motifs and reversibly associates with Golgi non-clathrin-coated vesicles, which further mediate biosynthetic protein transport from the ER, via the Golgi up to the trans Golgi network. Coatomer complex is required for budding from Golgi membranes, and is essential for the retrograde Golgi-to-ER transport of dilysine-tagged proteins. In mammals, the coatomer can only be recruited by membranes associated to ADP-ribosylation factors (ARFs), which are small GTP-binding proteins; the complex also influences the Golgi structural integrity, as well as the processing, activity, and endocytic recycling of LDL receptors. In terms of biological role, this coatomer complex protein, essential for Golgi budding and vesicular trafficking, is a selective binding protein (RACK) for protein kinase C, epsilon type. It binds to Golgi membranes in a GTP-dependent manner. This is Coatomer subunit beta' (COPB2) from Bos taurus (Bovine).